A 1686-amino-acid chain; its full sequence is MGLASRAPGKGGTSAGALASLFRVALLFFGLWDVQTQTVANTRPTYIWQTGPWGRCMGSECGPGGSQSRAVWCAHSEGWTTLHTNCQQSERPSNQQSCFRVCDWHKELYDWQLGAWNQCVPVSMRNAGVPRPAVCTRGEEGIQTREVGCVHKSDGVPAEDAICEYFEPKPRLEQACLIPCPRDCVVSEFSPWTSCSKSCGMGLQNRLRSVLAPPLFGGSACPNLTEFRTCQPGKCEGVESLHSLRVGPWGQCMASPIRQARDTGEARVPKAERKAKRDRQARQERQGKRRKNKEKKELRESKGERVRERVKEKKRMRDPETRELIKKKRTRNRQNRQGLKFWDLQVGYQTREVTCVHRSGSTASISQCTQQTLPVTYQACVISKDCEVSEWSDWSVCSKECYDLNGRKGQRTRTRQVQQFPVGGGAECPELEESEPCSPQGEGIPPCVVYNWRSTEWSDCRVDVLLSQQDRRRSNQTGLCGGGVQTREVYCVQAPSETSSNLGSLKSKDALRPVNSDLCLGVPHNTTQLCHIPCPVECEVSAWSAWGPCTFENCQDQSTKKGFKLRKRKIMNEPTGGTGNCPHLTEAIPCEEPSCYDWLLVKLEECVPDNDKVCGPGTQNPQVQCINSDGEFVDRQLCRDAILPMPVLCEVSCPKDCVLSPWTSWSLCSNTCSGKNSEGKQTRARSILAYNAGDGGVQCPNSSALQEVRSCNDHPCTVYHWQTGPWGQCIEDTSVPSANSSISRAVPGTAVNDAFCSVGMQTRKVICVRVNVGQVPPKKCPESLRPETVRPCLLPCKRDCVVTPYSDWTPCPSICQTGGSVKKKQSRKRIIIQLPANGGQDCPEVLFQEKDCDASSVCPGYRWKTHKWRRCQLVPWSIRQDSPGAQETCGPGLQARAVSCKKLDSGPADVAACLKFAGPMPQLTQSCQLPCQDDCQLTAWSKFSTCAADCVGVRTRKRTLVGKSKKREQCKNTQMYPLSETQYCPCNKYNAQPVGNWSDCILPEGRVEGLLGMKVQGDIKECGQGYRYQAMVCYDQDNRLVETSRCNSHGYIEEACIIPCPSDCKLSEWSNWSRCSKSCGSGVKVRSKWLREKPYNGGRPCPKLDHVNQAQVYEVVPCLSDCSQYVWVAEPWSVWKVSNVDLKENCGEGVQTRKVRCMQNTVDGPSDPVEDYLCDPEEMPLGARESKLPCPEDCVLTDWGSWSRCPLPCNVNSTRQRSASPIRQPSERKQCPSTTEKEICTLNSNCFHYSYNITDWSTCQLSERAVCGVGFKTRMLDCVRSDSKSVDLKFCEELGLEKKWQMNASCVVECPVNCQLSDWSSWSECSHTCGLAGKLWRRRTVIQASQGDGRPCSSQLEQWKPCPVKPCFSWRYSVWSPCKSEGARCGEGLRFRNVSCFVSDGSGKDAGSMVDEELCGDLEQTVDGDKQIILQESCTVPCPGECYLTDWTMWSPCQLSCIGGDDLGFGSVQVRSRAVLAQEPENLLQCPEQEWEARPCTEGQCYDYKWMTGAWRGSSRQVWCQRSDGLNVTGGCQSTTEPVSDRSCDPACDKPRSICTEAGICGCEEGYTEVMTSDGVLDQCTVIPVLEIPTAGDSKADVKTIRALNPTEPTANMPGRAGRTWFLQPFGPDGKLKTWVYGVAAGAFVLLVFIVSMTYLACKKPKKPQRRQMNNRLKPLTLAYDGDADM.

The signal sequence occupies residues 1–36 (MGLASRAPGKGGTSAGALASLFRVALLFFGLWDVQT). Residues 37–1635 (QTVANTRPTY…FGPDGKLKTW (1599 aa)) lie on the Extracellular side of the membrane. TSP type-1 domains lie at 44 to 103 (PTYI…RVCD), 107 to 181 (ELYD…IPCP), and 183 to 236 (DCVV…GKCE). N223 carries N-linked (GlcNAc...) asparagine glycosylation. The disordered stretch occupies residues 257 to 321 (IRQARDTGEA…EKKRMRDPET (65 aa)). 2 stretches are compositionally biased toward basic and acidic residues: residues 259–272 (QARD…PKAE) and 294–321 (EKKE…DPET). TSP type-1 domains follow at residues 385 to 441 (DCEV…SPQG), 448 to 535 (VVYN…IPCP), 537 to 596 (ECEV…PSCY), 656 to 717 (DCVL…HPCT), 718 to 797 (VYHW…LPCK), 799 to 859 (DCVV…SVCP), 860 to 932 (GYRW…LPCQ), 934 to 985 (DCQL…QYCP), 988 to 1061 (KYNA…IPCP), 1063 to 1123 (DCKL…SDCS), 1124 to 1191 (QYVW…LPCP), 1193 to 1247 (DCVL…SNCF), 1248 to 1311 (HYSY…VECP), 1313 to 1368 (NCQL…KPCF), 1369 to 1439 (SWRY…VPCP), and 1441 to 1502 (ECYL…GQCY). 3 disulfides stabilise this stretch: C460-C530, C480-C534, and C491-C519. N-linked (GlcNAc...) asparagine glycosylation is present at N475. N-linked (GlcNAc...) asparagine glycosylation occurs at N525. 2 disulfides stabilise this stretch: C657-C699 and C668-C672. N701 is a glycosylation site (N-linked (GlcNAc...) asparagine). 7 cysteine pairs are disulfide-bonded: C711-C716, C729-C792, C756-C796, C767-C780, C800-C842, C811-C815, and C852-C858. N-linked (GlcNAc...) asparagine glycosylation is present at N739. N996 carries N-linked (GlcNAc...) asparagine glycosylation. 6 cysteine pairs are disulfide-bonded: C1000/C1056, C1022/C1060, C1033/C1046, C1064/C1101, C1075/C1079, and C1118/C1122. N1071 is a glycosylation site (N-linked (GlcNAc...) asparagine). N-linked (GlcNAc...) asparagine glycosylation occurs at N1212. C1240 and C1246 form a disulfide bridge. N-linked (GlcNAc...) asparagine glycosylation is present at N1252. 12 cysteine pairs are disulfide-bonded: C1259–C1306, C1267–C1310, C1278–C1291, C1314–C1352, C1325–C1329, C1362–C1367, C1378–C1434, C1385–C1438, C1396–C1415, C1442–C1486, C1453–C1457, and C1496–C1501. The N-linked (GlcNAc...) asparagine glycan is linked to N1303. N-linked (GlcNAc...) asparagine glycosylation is present at N1393. The N-linked (GlcNAc...) asparagine glycan is linked to N1527. The chain crosses the membrane as a helical span at residues 1636–1656 (VYGVAAGAFVLLVFIVSMTYL). At 1657–1686 (ACKKPKKPQRRQMNNRLKPLTLAYDGDADM) the chain is on the cytoplasmic side.

Extensively N-glycosylated.

It is found in the cell membrane. The protein localises to the cell projection. In terms of biological role, required for normal sprouting angiogenesis and normal embryonic development of intersegmental vessels (ISV). Required for normal function of the glomerular filtration barrier. Required for normal axon outgrowth on embryonic motor neurons at the level of the horizontal myoseptum. Required for normal expression of notch1b, suggesting that its functions in angiogenesis and neuron outgrowth are due to decreased expression of notch1b. Plays a role in actin cytoskeleton rearrangement. The chain is Thrombospondin type-1 domain-containing protein 7A from Danio rerio (Zebrafish).